The sequence spans 101 residues: Small ribosomal subunit protein bS18c (101 aa).

The span at 1–19 (MDKSKQLFRKSKGSFRRRL) shows a compositional bias: basic residues. The interval 1–23 (MDKSKQLFRKSKGSFRRRLPPIG) is disordered.

It belongs to the bacterial ribosomal protein bS18 family. As to quaternary structure, part of the 30S ribosomal subunit.

Its subcellular location is the plastid. The protein localises to the chloroplast. The sequence is that of Small ribosomal subunit protein bS18c from Acorus gramineus (Dwarf sweet flag).